Reading from the N-terminus, the 425-residue chain is Sucrose-phosphatase 1 (425 aa).

It belongs to the sucrose phosphatase family. Homodimer. Mg(2+) serves as cofactor.

The enzyme catalyses sucrose 6(F)-phosphate + H2O = sucrose + phosphate. Its pathway is glycan biosynthesis; sucrose biosynthesis; sucrose from D-fructose 6-phosphate and UDP-alpha-D-glucose: step 2/2. Inhibited by EDTA. Its function is as follows. Catalyzes the final step of sucrose synthesis. The protein is Sucrose-phosphatase 1 (SPP1) of Nicotiana tabacum (Common tobacco).